A 208-amino-acid polypeptide reads, in one-letter code: MSYKLTYFSIRGLAEPIRLFLVDQDIKFIDDRIAKDDFSSIKSQFQFGQLPCLYDGDQQIVQSGAILRHLARKYNLNGENEMETTYIDMFCEGVRDLHVKYTRMIYMAYETEKDPYIKSILPGELAKFEKLLATRGNGRNLILGDKISYADYALFEELDVHQILDPHCLDKFPLLKAFHQRMKDRPKLKEYCEKRDAAKVPVNGNGKQ.

A GST N-terminal domain is found at 1-78; sequence MSYKLTYFSI…HLARKYNLNG (78 aa). Glutathione-binding positions include Tyr7, Lys42, 49–50, and 62–63; these read QL and QS. The GST C-terminal domain occupies 80-200; sequence NEMETTYIDM…YCEKRDAAKV (121 aa).

This sequence belongs to the GST superfamily. Pi family. In terms of assembly, homodimer. Hypodermis, wall of the seminal receptacle and spermatozoa of adult worms.

It catalyses the reaction RX + glutathione = an S-substituted glutathione + a halide anion + H(+). Its function is as follows. Appears to play a central role in the parasite detoxification system. The sequence is that of Glutathione S-transferase 2 (GST2) from Onchocerca volvulus.